The following is a 351-amino-acid chain: Ferredoxin--NADP reductase (351 aa).

Residues T14, D33, Q41, Y46, A86, F121, D287, and T328 each contribute to the FAD site.

This sequence belongs to the ferredoxin--NADP reductase type 2 family. As to quaternary structure, homodimer. The cofactor is FAD.

The enzyme catalyses 2 reduced [2Fe-2S]-[ferredoxin] + NADP(+) + H(+) = 2 oxidized [2Fe-2S]-[ferredoxin] + NADPH. This is Ferredoxin--NADP reductase from Flavobacterium psychrophilum (strain ATCC 49511 / DSM 21280 / CIP 103535 / JIP02/86).